A 165-amino-acid polypeptide reads, in one-letter code: Small ribosomal subunit protein uS5 (165 aa).

The region spanning L10 to V73 is the S5 DRBM domain.

It belongs to the universal ribosomal protein uS5 family. As to quaternary structure, part of the 30S ribosomal subunit. Contacts proteins S4 and S8.

Functionally, with S4 and S12 plays an important role in translational accuracy. In terms of biological role, located at the back of the 30S subunit body where it stabilizes the conformation of the head with respect to the body. The polypeptide is Small ribosomal subunit protein uS5 (Clostridium perfringens (strain ATCC 13124 / DSM 756 / JCM 1290 / NCIMB 6125 / NCTC 8237 / Type A)).